The chain runs to 272 residues: Replication-associated protein A (272 aa).

Positions Ser11 to Phe114 constitute a CRESS-DNA virus Rep endonuclease domain. Positions Phe18–Tyr21 match the RCR-1 motif. The a divalent metal cation site is built by Glu52, His60, and His62. The RCR-2 signature appears at His60–His62. Tyr100 functions as the For DNA cleavage activity in the catalytic mechanism. The RCR-3 motif lies at Tyr100–Lys103. Glu104 is a binding site for a divalent metal cation. The segment at Ser175–Phe187 is oligomerization. Residues Leu198–Glu202 form a binding to RBR1 region. Positions Met221–Leu230 are transactivation. Residues Ser245 to Ala272 form a disordered region. Residues Arg254–Glu265 show a composition bias toward polar residues.

This sequence belongs to the geminiviridae Rep protein family. In terms of assembly, homooligomer. Interacts with host retinoblastoma-related protein 1 (RBR1), and may thereby deregulate the host cell cycle. Part of the C- and V-complexes which are RepA-Rep-DNA complexes involved in the c-sense and v-sense transcription. The cofactor is Mg(2+). Mn(2+) serves as cofactor.

The protein resides in the host nucleus. It is found in the host cytoplasm. In terms of biological role, implicated in enhancement of V-sense gene expression. Acts a an inhibitor of C-sense gene transcription. This is Replication-associated protein A from Avena sativa (Oat).